The primary structure comprises 609 residues: Sulfite reductase [NADPH] flavoprotein alpha-component (609 aa).

In terms of domain architecture, Flavodoxin-like spans 72 to 210; that stretch reads ITLISASQTG…LAAQWRRQLV (139 aa). FMN-binding positions include 78–83 and 125–128; these read SQTGNA and STQG. The FAD-binding FR-type domain maps to 244-458; the sequence is SSPLQATFAV…IEHNDNFRLP (215 aa). FAD-binding positions include threonine 332, glutamine 366, 396-399, 414-416, tyrosine 420, and 429-432; these read RLYS, TVG, and GGAS. Residues 529 to 530, 535 to 539, and aspartate 571 contribute to the NADP(+) site; these read SR and KIYVQ. Position 609 (tyrosine 609) interacts with FAD.

This sequence belongs to the NADPH-dependent sulphite reductase flavoprotein subunit CysJ family. It in the N-terminal section; belongs to the flavodoxin family. In the C-terminal section; belongs to the flavoprotein pyridine nucleotide cytochrome reductase family. Alpha(8)-beta(8). The alpha component is a flavoprotein, the beta component is a hemoprotein. It depends on FAD as a cofactor. The cofactor is FMN.

It carries out the reaction hydrogen sulfide + 3 NADP(+) + 3 H2O = sulfite + 3 NADPH + 4 H(+). Its pathway is sulfur metabolism; hydrogen sulfide biosynthesis; hydrogen sulfide from sulfite (NADPH route): step 1/1. Component of the sulfite reductase complex that catalyzes the 6-electron reduction of sulfite to sulfide. This is one of several activities required for the biosynthesis of L-cysteine from sulfate. The flavoprotein component catalyzes the electron flow from NADPH -&gt; FAD -&gt; FMN to the hemoprotein component. The polypeptide is Sulfite reductase [NADPH] flavoprotein alpha-component (Pectobacterium atrosepticum (strain SCRI 1043 / ATCC BAA-672) (Erwinia carotovora subsp. atroseptica)).